The primary structure comprises 255 residues: 5-oxoprolinase subunit A (255 aa).

Belongs to the LamB/PxpA family. Forms a complex composed of PxpA, PxpB and PxpC.

The enzyme catalyses 5-oxo-L-proline + ATP + 2 H2O = L-glutamate + ADP + phosphate + H(+). Its function is as follows. Catalyzes the cleavage of 5-oxoproline to form L-glutamate coupled to the hydrolysis of ATP to ADP and inorganic phosphate. The polypeptide is 5-oxoprolinase subunit A (Nitrobacter hamburgensis (strain DSM 10229 / NCIMB 13809 / X14)).